The sequence spans 297 residues: uncharacterized protein (297 aa).

A compositionally biased stretch (polar residues) spans 1-12 (MASYSFQFSTDA). The segment at 1–21 (MASYSFQFSTDATGKPGAAKP) is disordered.

This sequence to B.subtilis XkdY/XepA.

This is an uncharacterized protein from Bacillus subtilis (strain 168).